The sequence spans 297 residues: Calponin-1 (297 aa).

In terms of domain architecture, Calponin-homology (CH) spans 28-131 (HQREQELREW…STLLALASMA (104 aa)). 3 Calponin-like repeats span residues 164-189 (IGLQMGTNKFASQQGMTAYGTRRHLY), 204-229 (ISLQMGTNKGASQAGMTAPGTKRQIF), and 243-268 (VSLQMGSNKGASQRGMTVYGLPRQVY). Residue threonine 170 is modified to Phosphothreonine; by ROCK2. At serine 175 the chain carries Phosphoserine; by ROCK2. Phosphothreonine; by ROCK2 is present on residues threonine 180 and threonine 184. Threonine 259 is modified (phosphothreonine; by ROCK2).

The protein belongs to the calponin family. Part of cGMP kinase signaling complex at least composed of ACTA2/alpha-actin, CNN1/calponin H1, PLN/phospholamban, PRKG1 and ITPR1. Smooth muscle, and tissues containing significant amounts of smooth muscle.

Thin filament-associated protein that is implicated in the regulation and modulation of smooth muscle contraction. It is capable of binding to actin, calmodulin and tropomyosin. The interaction of calponin with actin inhibits the actomyosin Mg-ATPase activity. This chain is Calponin-1 (CNN1), found in Homo sapiens (Human).